Consider the following 335-residue polypeptide: Deoxyhypusine hydroxylase (335 aa).

HEAT-like PBS-type repeat units lie at residues 71–97, 104–130, 200–233, 238–264, and 271–298; these read LKHE…VVKD, CRHE…LRDN, QRYR…GLKD, FRHE…ALSD, and VRHE…FLND. Positions 73, 74, 106, and 107 each coordinate Fe cation. Histidine 240, glutamate 241, histidine 273, and glutamate 274 together coordinate Fe cation.

The protein belongs to the deoxyhypusine hydroxylase family. Fe(2+) is required as a cofactor.

The protein localises to the cytoplasm. Its subcellular location is the nucleus. The enzyme catalyses [eIF5A protein]-deoxyhypusine + AH2 + O2 = [eIF5A protein]-hypusine + A + H2O. The protein operates within protein modification; eIF5A hypusination. Catalyzes the hydroxylation of the N(6)-(4-aminobutyl)-L-lysine intermediate to form hypusine, an essential post-translational modification only found in mature eIF-5A factor. The polypeptide is Deoxyhypusine hydroxylase (lia1) (Aspergillus clavatus (strain ATCC 1007 / CBS 513.65 / DSM 816 / NCTC 3887 / NRRL 1 / QM 1276 / 107)).